Here is a 185-residue protein sequence, read N- to C-terminus: Methanol dehydrogenase activator (185 aa).

This sequence belongs to the Nudix hydrolase family. As to quaternary structure, homodimer. Mg(2+) is required as a cofactor.

Its function is as follows. Involved in the activation of the NAD-dependent methanol dehydrogenase (MDH). MDH activation by Act involves hydrolytic removal of the nicotinamide mononucleotide (NMN) moiety of the NAD cofactor, changing its ping-pong type of reaction mechanism into a ternary complex reaction mechanism. It requires the presence of magnesium ions and is also able to use ADP-ribose. This Bacillus methanolicus protein is Methanol dehydrogenase activator.